Reading from the N-terminus, the 1364-residue chain is Serine protease SepA autotransporter (1364 aa).

The signal sequence occupies residues 1–56 (MNKIYYLKYCHITKSLIAVSELARRVTCKSHRRLSRRVILTSVAALSLSSAWPALS). The region spanning 57–307 (ATVSAEIPYQ…VVTTQDFLGQ (251 aa)) is the Peptidase S6 domain. Catalysis depends on charge relay system residues His134, Asp162, and Ser267. The Autotransporter domain occupies 1098–1364 (DTQGDAGVWA…AINANFRYVF (267 aa)).

In terms of processing, cleaved to release the mature protein from the outer membrane. Cleavage is performed by an unknown protease.

It is found in the periplasm. Its subcellular location is the secreted. It localises to the cell surface. The protein localises to the cell outer membrane. Its activity is regulated as follows. Inhibited by the serine protease inhibitor PMSF, but not by benzamidine, alpha 1-antitrypsin, alpha 1-antichymotrypsin. Not inhibited by metalloprotease inhibitors such as EDTA and orthophenanthroline. Its function is as follows. Major protein secreted in laboratory media showing proteolytic activity. May be involved in invasion and destruction of host intestinal epithelium. In Shigella flexneri, this protein is Serine protease SepA autotransporter (sepA).